We begin with the raw amino-acid sequence, 188 residues long: Xanthine phosphoribosyltransferase (188 aa).

Residues L20 and N27 each coordinate xanthine. Position 127–131 (127–131 (AYGNA)) interacts with 5-phospho-alpha-D-ribose 1-diphosphate. K155 is a binding site for xanthine.

Belongs to the purine/pyrimidine phosphoribosyltransferase family. Xpt subfamily. In terms of assembly, homodimer.

It is found in the cytoplasm. The catalysed reaction is XMP + diphosphate = xanthine + 5-phospho-alpha-D-ribose 1-diphosphate. It participates in purine metabolism; XMP biosynthesis via salvage pathway; XMP from xanthine: step 1/1. Converts the preformed base xanthine, a product of nucleic acid breakdown, to xanthosine 5'-monophosphate (XMP), so it can be reused for RNA or DNA synthesis. The polypeptide is Xanthine phosphoribosyltransferase (Parabacteroides distasonis (strain ATCC 8503 / DSM 20701 / CIP 104284 / JCM 5825 / NCTC 11152)).